Here is a 295-residue protein sequence, read N- to C-terminus: GTPase Era (295 aa).

The Era-type G domain maps to Y5–E172. The segment at G13 to S20 is G1. Residue G13–S20 participates in GTP binding. Positions Q39–Y43 are G2. Residues D60–G63 form a G3 region. GTP is bound by residues D60–L64 and N121–D124. The segment at N121–D124 is G4. The segment at L151–A153 is G5. Residues L203–S279 form the KH type-2 domain.

This sequence belongs to the TRAFAC class TrmE-Era-EngA-EngB-Septin-like GTPase superfamily. Era GTPase family. Monomer.

It localises to the cytoplasm. Its subcellular location is the cell inner membrane. An essential GTPase that binds both GDP and GTP, with rapid nucleotide exchange. Plays a role in 16S rRNA processing and 30S ribosomal subunit biogenesis and possibly also in cell cycle regulation and energy metabolism. The polypeptide is GTPase Era (Coxiella burnetii (strain CbuK_Q154) (Coxiella burnetii (strain Q154))).